The chain runs to 393 residues: Lipid-A-disaccharide synthase (393 aa).

Belongs to the LpxB family.

It catalyses the reaction a lipid X + a UDP-2-N,3-O-bis[(3R)-3-hydroxyacyl]-alpha-D-glucosamine = a lipid A disaccharide + UDP + H(+). It functions in the pathway bacterial outer membrane biogenesis; LPS lipid A biosynthesis. In terms of biological role, condensation of UDP-2,3-diacylglucosamine and 2,3-diacylglucosamine-1-phosphate to form lipid A disaccharide, a precursor of lipid A, a phosphorylated glycolipid that anchors the lipopolysaccharide to the outer membrane of the cell. The chain is Lipid-A-disaccharide synthase from Bordetella pertussis (strain Tohama I / ATCC BAA-589 / NCTC 13251).